Reading from the N-terminus, the 394-residue chain is Sugar efflux transporter C (394 aa).

Topologically, residues 1-10 (MQKTATTPSK) are periplasmic. A helical membrane pass occupies residues 11-31 (ILDLTAAAFLLVAFLTGIAGA). Residues 32 to 49 (LQTPTLSIFLADELKARP) lie on the Cytoplasmic side of the membrane. Residues 50–70 (IMVGFFFTGSAIMGILVSQFL) form a helical membrane-spanning segment. The Periplasmic segment spans residues 71 to 80 (ARHSDKQGDR). A helical transmembrane segment spans residues 81-101 (KLLILLCCLFGVLACTLFAWN). Over 102 to 104 (RNY) the chain is Cytoplasmic. A helical membrane pass occupies residues 105 to 125 (FILLSTGVLLSSFASTANPQM). At 126–150 (FALAREHADRTGRETVMFSTFLRAQ) the chain is on the periplasmic side. A helical transmembrane segment spans residues 151 to 171 (ISLAWVIGPPLAYELAMGFSF). Position 172 (Lys172) is a topological domain, cytoplasmic. The chain crosses the membrane as a helical span at residues 173 to 193 (VMYLTAAIAFVVCGLIVWLFL). Over 194 to 224 (PSIQRNIPVVTQPVEILPSTHRKRDTRLLFV) the chain is Periplasmic. A helical membrane pass occupies residues 225 to 245 (VCSMMWAANNLYMINMPLFII). Over 246–253 (DELHLTDK) the chain is Cytoplasmic. A helical membrane pass occupies residues 254-274 (LTGEMIGIAAGLEIPMMLIAG). Topologically, residues 275-283 (YYMKRIGKR) are periplasmic. Residues 284–304 (LLMLIAIVSGMCFYASVLMAT) form a helical membrane-spanning segment. At 305-310 (TPAVEL) the chain is on the cytoplasmic side. Residues 311 to 331 (ELQILNAIFLGILCGIGMLYF) traverse the membrane as a helical segment. Residues 332–370 (QDLMPEKIGSATTLYANTSRVGWIIAGSVDGIMVEIWSY) are Periplasmic-facing. A helical membrane pass occupies residues 371–391 (HALFWLAIGMLGIAMICLLFI). Topologically, residues 392–394 (KDI) are cytoplasmic.

The protein belongs to the major facilitator superfamily. Set transporter family.

The protein localises to the cell inner membrane. Its function is as follows. Involved in the efflux of sugars. The physiological role may be the detoxification of non-metabolizable sugar analogs. In Escherichia coli (strain K12), this protein is Sugar efflux transporter C (setC).